We begin with the raw amino-acid sequence, 193 residues long: Acyl carrier protein phosphodiesterase (193 aa).

Belongs to the AcpH family.

It carries out the reaction holo-[ACP] + H2O = apo-[ACP] + (R)-4'-phosphopantetheine + H(+). Its function is as follows. Converts holo-ACP to apo-ACP by hydrolytic cleavage of the phosphopantetheine prosthetic group from ACP. This chain is Acyl carrier protein phosphodiesterase, found in Enterobacter sp. (strain 638).